The sequence spans 198 residues: FMN-dependent NADH:quinone oxidoreductase (198 aa).

Residues Ser9 and 95–98 each bind FMN; that span reads MYNF.

This sequence belongs to the azoreductase type 1 family. In terms of assembly, homodimer. Requires FMN as cofactor.

It catalyses the reaction 2 a quinone + NADH + H(+) = 2 a 1,4-benzosemiquinone + NAD(+). The enzyme catalyses N,N-dimethyl-1,4-phenylenediamine + anthranilate + 2 NAD(+) = 2-(4-dimethylaminophenyl)diazenylbenzoate + 2 NADH + 2 H(+). Its function is as follows. Quinone reductase that provides resistance to thiol-specific stress caused by electrophilic quinones. In terms of biological role, also exhibits azoreductase activity. Catalyzes the reductive cleavage of the azo bond in aromatic azo compounds to the corresponding amines. This Alcanivorax borkumensis (strain ATCC 700651 / DSM 11573 / NCIMB 13689 / SK2) protein is FMN-dependent NADH:quinone oxidoreductase.